We begin with the raw amino-acid sequence, 134 residues long: Small ribosomal subunit protein uS11 (134 aa).

It belongs to the universal ribosomal protein uS11 family. As to quaternary structure, part of the 30S ribosomal subunit. Interacts with proteins S7 and S18. Binds to IF-3.

Located on the platform of the 30S subunit, it bridges several disparate RNA helices of the 16S rRNA. Forms part of the Shine-Dalgarno cleft in the 70S ribosome. In Corynebacterium glutamicum (strain R), this protein is Small ribosomal subunit protein uS11.